The following is a 219-amino-acid chain: 2-hydroxy-3-keto-5-methylthiopentenyl-1-phosphate phosphatase (219 aa).

It belongs to the HAD-like hydrolase superfamily. MtnX family.

The catalysed reaction is 2-hydroxy-5-methylsulfanyl-3-oxopent-1-enyl phosphate + H2O = 1,2-dihydroxy-5-(methylsulfanyl)pent-1-en-3-one + phosphate. The protein operates within amino-acid biosynthesis; L-methionine biosynthesis via salvage pathway; L-methionine from S-methyl-5-thio-alpha-D-ribose 1-phosphate: step 4/6. In terms of biological role, dephosphorylates 2-hydroxy-3-keto-5-methylthiopentenyl-1-phosphate (HK-MTPenyl-1-P) yielding 1,2-dihydroxy-3-keto-5-methylthiopentene (DHK-MTPene). This Bacillus anthracis (strain A0248) protein is 2-hydroxy-3-keto-5-methylthiopentenyl-1-phosphate phosphatase.